We begin with the raw amino-acid sequence, 542 residues long: Sensory neuron membrane protein 2 (542 aa).

The Extracellular segment spans residues 1-487 (MMVMNTELRQ…MKVLTLLDIV (487 aa)). N-linked (GlcNAc...) asparagine glycosylation is found at asparagine 33, asparagine 128, asparagine 238, and asparagine 274. 3 disulfides stabilise this stretch: cysteine 283/cysteine 351, cysteine 312/cysteine 378, and cysteine 353/cysteine 367. A helical transmembrane segment spans residues 488–508 (QWVMIGSGLLLAIIMPIVYFI). The Cytoplasmic segment spans residues 509 to 542 (KRRPSSGSITPTLTTTTSTVSISDGGGLGGNPQK).

This sequence belongs to the CD36 family. In terms of tissue distribution, detected in the antenna, legs and wings. Higher levels of expression detected in male compared to female.

It localises to the cell membrane. Plays an olfactory role that is not restricted to pheromone sensitivity. This chain is Sensory neuron membrane protein 2, found in Aedes aegypti (Yellowfever mosquito).